A 546-amino-acid polypeptide reads, in one-letter code: Chaperonin GroEL 1 (546 aa).

ATP is bound by residues 30 to 33 (TLGP), Lys51, 87 to 91 (DGTTT), Gly415, 479 to 481 (NAA), and Asp495. A disordered region spans residues 526 to 546 (KEDAPMPGGMPGGMGGMGMDM). A compositionally biased stretch (gly residues) spans 534 to 546 (GMPGGMGGMGMDM).

It belongs to the chaperonin (HSP60) family. As to quaternary structure, forms a cylinder of 14 subunits composed of two heptameric rings stacked back-to-back. Interacts with the co-chaperonin GroES.

Its subcellular location is the cytoplasm. The enzyme catalyses ATP + H2O + a folded polypeptide = ADP + phosphate + an unfolded polypeptide.. Functionally, together with its co-chaperonin GroES, plays an essential role in assisting protein folding. The GroEL-GroES system forms a nano-cage that allows encapsulation of the non-native substrate proteins and provides a physical environment optimized to promote and accelerate protein folding. The chain is Chaperonin GroEL 1 from Burkholderia vietnamiensis (strain G4 / LMG 22486) (Burkholderia cepacia (strain R1808)).